Here is a 456-residue protein sequence, read N- to C-terminus: GTPase Der (456 aa).

EngA-type G domains are found at residues 4–169 and 178–353; these read PIVA…PSKE and IQLA…EQHR. GTP contacts are provided by residues 10–17, 57–61, 120–123, 184–191, 231–235, and 296–299; these read GRPNVGKS, DTGGL, NKCE, DTAGI, and NKWD. Residues 354-439 enclose the KH-like domain; that stretch reads RRVSTSVVNE…PLKLFWRGKQ (86 aa).

It belongs to the TRAFAC class TrmE-Era-EngA-EngB-Septin-like GTPase superfamily. EngA (Der) GTPase family. As to quaternary structure, associates with the 50S ribosomal subunit.

Functionally, GTPase that plays an essential role in the late steps of ribosome biogenesis. The protein is GTPase Der of Prochlorococcus marinus (strain MIT 9211).